A 147-amino-acid chain; its full sequence is Mediator of RNA polymerase II transcription subunit 10 (147 aa).

This sequence belongs to the Mediator complex subunit 10 family. As to quaternary structure, component of the Mediator complex.

It is found in the nucleus. Functionally, component of the Mediator complex, a coactivator involved in the regulated transcription of nearly all RNA polymerase II-dependent genes. Mediator functions as a bridge to convey information from gene-specific regulatory proteins to the basal RNA polymerase II transcription machinery. Mediator is recruited to promoters by direct interactions with regulatory proteins and serves as a scaffold for the assembly of a functional preinitiation complex with RNA polymerase II and the general transcription factors. The polypeptide is Mediator of RNA polymerase II transcription subunit 10 (NUT2) (Debaryomyces hansenii (strain ATCC 36239 / CBS 767 / BCRC 21394 / JCM 1990 / NBRC 0083 / IGC 2968) (Yeast)).